We begin with the raw amino-acid sequence, 333 residues long: Squamosa promoter-binding-like protein 8 (333 aa).

Residues 1-28 (MLDYEWDNPSSIVLSGDERNPDSDPTRS) form a disordered region. The span at 16–25 (GDERNPDSDP) shows a compositional bias: basic and acidic residues. The segment at 179 to 269 (MANSLSTPRC…RKCHQSASAT (91 aa)) is sufficient and necessary for DNA binding. The segment at 185–262 (TPRCQAEGCN…ADHNRRRRKC (78 aa)) adopts an SBP-type zinc-finger fold. 8 residues coordinate Zn(2+): C188, C193, C210, H213, C229, C232, H236, and C248. The Bipartite nuclear localization signal signature appears at 245–261 (KRSCRKRLADHNRRRRK). Disordered regions lie at residues 254-303 (DHNR…TISL) and 314-333 (TASSSTSASSSSNSMFFSSG). Over residues 264-284 (QSASATQDTGTGKTTPKSPND) the composition is skewed to polar residues. Residues 289-299 (ASSSPSSNAPP) show a composition bias toward low complexity.

Requires Zn(2+) as cofactor. In terms of tissue distribution, expressed in shoot apical region and early floral tissues. Transcripts levels increase in developing pollen sacs, and decrease in later stage of anther development. Strongly expressed in the placental region of the carpels.

It is found in the nucleus. Its subcellular location is the cytoplasm. In terms of biological role, trans-acting factor that binds specifically to the consensus nucleotide sequence 5'-TNCGTACAA-3'. Binds specifically to the 5'-GTAC-3' core sequence. Involved in development and floral organogenesis. Required for ovule differentiation, pollen production, filament elongation, seed formation and siliques elongation. Also seems to play a role in the formation of trichomes on sepals. May positively modulate gibberellin (GA) signaling in flower. The polypeptide is Squamosa promoter-binding-like protein 8 (SPL8) (Arabidopsis thaliana (Mouse-ear cress)).